The chain runs to 149 residues: Nucleoside diphosphate kinase (149 aa).

K9, F57, R85, T91, R102, and N112 together coordinate ATP. Residue H115 is the Pros-phosphohistidine intermediate of the active site.

The protein belongs to the NDK family. Homotetramer. Mg(2+) serves as cofactor.

It is found in the cytoplasm. It catalyses the reaction a 2'-deoxyribonucleoside 5'-diphosphate + ATP = a 2'-deoxyribonucleoside 5'-triphosphate + ADP. The catalysed reaction is a ribonucleoside 5'-diphosphate + ATP = a ribonucleoside 5'-triphosphate + ADP. In terms of biological role, major role in the synthesis of nucleoside triphosphates other than ATP. The ATP gamma phosphate is transferred to the NDP beta phosphate via a ping-pong mechanism, using a phosphorylated active-site intermediate. In Staphylococcus saprophyticus subsp. saprophyticus (strain ATCC 15305 / DSM 20229 / NCIMB 8711 / NCTC 7292 / S-41), this protein is Nucleoside diphosphate kinase.